The primary structure comprises 185 residues: MGRGKTPNLGEFRVATDQSASRKISQFCVRLEAKQRLRFNYGLTERQLLKYVRIARKTRGSTGQVPPQLLEMRLDNVIFRLGMASTIPAARQLVNHRHILVNNRIVDVPSYRCKPKDIITVRNRPTSCNALKGESPGGGETPDHLTASLSEGSRPTGLVNRIANRESVNLNINELLVVEYYSRKA.

Positions 72–134 constitute an S4 RNA-binding domain; the sequence is MRLDNVIFRL…PTSCNALKGE (63 aa). Residues 132–154 are disordered; sequence KGESPGGGETPDHLTASLSEGSR.

This sequence belongs to the universal ribosomal protein uS4 family. Part of the 30S ribosomal subunit. Contacts protein S5. The interaction surface between S4 and S5 is involved in control of translational fidelity.

It is found in the plastid. The protein resides in the chloroplast. One of the primary rRNA binding proteins, it binds directly to 16S rRNA where it nucleates assembly of the body of the 30S subunit. Functionally, with S5 and S12 plays an important role in translational accuracy. This Woodwardia unigemmata (Chainfern) protein is Small ribosomal subunit protein uS4c (rps4).